The primary structure comprises 344 residues: N-acetyl-gamma-glutamyl-phosphate reductase (344 aa).

C150 is a catalytic residue.

Belongs to the NAGSA dehydrogenase family. Type 1 subfamily.

The protein resides in the cytoplasm. It carries out the reaction N-acetyl-L-glutamate 5-semialdehyde + phosphate + NADP(+) = N-acetyl-L-glutamyl 5-phosphate + NADPH + H(+). It participates in amino-acid biosynthesis; L-arginine biosynthesis; N(2)-acetyl-L-ornithine from L-glutamate: step 3/4. Catalyzes the NADPH-dependent reduction of N-acetyl-5-glutamyl phosphate to yield N-acetyl-L-glutamate 5-semialdehyde. The polypeptide is N-acetyl-gamma-glutamyl-phosphate reductase (Pseudomonas aeruginosa (strain ATCC 15692 / DSM 22644 / CIP 104116 / JCM 14847 / LMG 12228 / 1C / PRS 101 / PAO1)).